Here is a 363-residue protein sequence, read N- to C-terminus: Molybdenum import ATP-binding protein ModC (363 aa).

In terms of domain architecture, ABC transporter spans 1–230 (MISARFSGRQ…PNLPLIHRPD (230 aa)). 31–38 (GPSGCGKT) contacts ATP. The Mop domain occupies 289–359 (DTTILNALPA…LKAMALSAPA (71 aa)).

This sequence belongs to the ABC transporter superfamily. Molybdate importer (TC 3.A.1.8) family. In terms of assembly, the complex is composed of two ATP-binding proteins (ModC), two transmembrane proteins (ModB) and a solute-binding protein (ModA).

It is found in the cell inner membrane. The enzyme catalyses molybdate(out) + ATP + H2O = molybdate(in) + ADP + phosphate + H(+). Its function is as follows. Part of the ABC transporter complex ModABC involved in molybdenum import. Responsible for energy coupling to the transport system. The protein is Molybdenum import ATP-binding protein ModC of Rhodobacter capsulatus (Rhodopseudomonas capsulata).